The following is a 30-amino-acid chain: U5-ctenitoxin-Pk1b (30 aa).

Intrachain disulfides connect C6-C23 and C13-C29.

It belongs to the neurotoxin 04 (omega-agtx) family. 02 (Tx1) subfamily. Expressed by the venom gland.

Its subcellular location is the secreted. In terms of biological role, lethal neurotoxin. Causes spastic paralysis and death in mice in 4-6 minutes after intracerebroventricular injection at dose levels of 1.5 ug per mouse. The sequence is that of U5-ctenitoxin-Pk1b from Phoneutria keyserlingi (Brazilian wandering spider).